A 440-amino-acid chain; its full sequence is D-serine dehydratase (440 aa).

At Lys116 the chain carries N6-(pyridoxal phosphate)lysine.

It belongs to the serine/threonine dehydratase family. DsdA subfamily. Monomer. Pyridoxal 5'-phosphate serves as cofactor.

The catalysed reaction is D-serine = pyruvate + NH4(+). In Salmonella choleraesuis (strain SC-B67), this protein is D-serine dehydratase.